An 895-amino-acid polypeptide reads, in one-letter code: Putative endoplasmic reticulum metallopeptidase 1-A (895 aa).

A disordered region spans residues 1 to 30 (MLRRRGGPNELRDELNNSKNQPEDDQRTKR). The Cytoplasmic segment spans residues 1–34 (MLRRRGGPNELRDELNNSKNQPEDDQRTKRGRES). The span at 10-30 (ELRDELNNSKNQPEDDQRTKR) shows a compositional bias: basic and acidic residues. The helical transmembrane segment at 35–55 (IGFRHWIYFVLTVAIVYAGVV) threads the bilayer. Residues 56 to 383 (ALHRKMPAVR…VVGLFTVYYS (328 aa)) are Lumenal-facing. Residues His-174 and Asp-186 each contribute to the Zn(2+) site. Glu-220 (proton acceptor) is an active-site residue. The Zn(2+) site is built by Glu-221, Glu-247, and His-323. A helical membrane pass occupies residues 384-404 (VNVGKLLNYIACFATYFLVVL). Topologically, residues 405–423 (RIRNRLYSVGDLAIAFKHH) are cytoplasmic. The helical transmembrane segment at 424–444 (VVAFLAMVITMLLIIAFVVQM) threads the bilayer. Topologically, residues 445–452 (DLVMCWYK) are lumenal. A helical membrane pass occupies residues 453–473 (MPEIVGALYVLPMLIAGAIVH). At 474–492 (SHYADNNRIRNVEMVQYDT) the chain is on the cytoplasmic side. Residues 493–513 (ILLSFASILFLMTFYNLSSAF) traverse the membrane as a helical segment. Residues 514 to 517 (YVLN) are Lumenal-facing. The chain crosses the membrane as a helical span at residues 518 to 538 (NLILPVFKDIIIWALGLFGVI). Over 539–544 (RRVTPR) the chain is Cytoplasmic. A helical membrane pass occupies residues 545-565 (VLFFTQLFCFLPTFVFAAYAI). Residues 566–586 (SQCVDFFVPVMGRLGNAINPE) are Lumenal-facing. A helical transmembrane segment spans residues 587-607 (FIMGPLGLVIASGFILFVNNL). Residues 608–613 (FYISRR) lie on the Cytoplasmic side of the membrane. A helical membrane pass occupies residues 614 to 634 (MNYIIRLLFAIFALFILVLIT). Residues 635-895 (TKVGNPYEYS…GRSEIVVKIF (261 aa)) are Lumenal-facing. 3 N-linked (GlcNAc...) asparagine glycosylation sites follow: Asn-659, Asn-702, and Asn-758.

Belongs to the peptidase M28 family. Requires Zn(2+) as cofactor.

The protein resides in the endoplasmic reticulum membrane. This Caenorhabditis elegans protein is Putative endoplasmic reticulum metallopeptidase 1-A.